The chain runs to 300 residues: Cation-efflux pump FieF (300 aa).

The helical transmembrane segment at 24-44 threads the bilayer; that stretch reads LLIKIFAWWYTGSVSILAALV. The Zn(2+) site is built by Asp-45 and Asp-49. A run of 2 helical transmembrane segments spans residues 82-102 and 114-134; these read AALAQSMFISGSALFLFLTGI and AGVGVVVTLIALVSTLALVTF. Residues His-153 and Asp-157 each coordinate Zn(2+). A run of 2 helical transmembrane segments spans residues 156–176 and 178–198; these read SDVMMNGAILVALGLSWYGWH and ADALFALGIGIYILYSALRMG.

This sequence belongs to the cation diffusion facilitator (CDF) transporter (TC 2.A.4) family. FieF subfamily. In terms of assembly, homodimer.

It localises to the cell inner membrane. The enzyme catalyses Zn(2+)(in) + H(+)(out) = Zn(2+)(out) + H(+)(in). The catalysed reaction is Cd(2+)(in) + H(+)(out) = Cd(2+)(out) + H(+)(in). It carries out the reaction Fe(2+)(in) + H(+)(out) = Fe(2+)(out) + H(+)(in). Functionally, divalent metal cation transporter which exports Zn(2+), Cd(2+) and possibly Fe(2+). May be involved in zinc and iron detoxification by efflux. The sequence is that of Cation-efflux pump FieF from Klebsiella pneumoniae subsp. pneumoniae (strain ATCC 700721 / MGH 78578).